The chain runs to 71 residues: Putative membrane protein insertion efficiency factor (71 aa).

Belongs to the UPF0161 family.

It is found in the cell membrane. In terms of biological role, could be involved in insertion of integral membrane proteins into the membrane. The chain is Putative membrane protein insertion efficiency factor from Desulforudis audaxviator (strain MP104C).